The chain runs to 616 residues: MPASFADTTFTDPSRIRNFCIIAHIDHGKSTLADRMLQLTGVVEERAMRAQYLDRMDIERERGITIKAQNVRLPWRVDDTDYVMHLIDTPGHVDFTYEVSRALEACEGAILLVDAAQGIEAQTLANLYLALDKDLTIIPVLNKIDLPAADPDRYAAELAHIVGCEPSDVLRVSGKTGVGVPELLDEVIRQVPPPVGDADAPARAMIFDSVYDTYRGVVTYVRVVDGKLTPREKIKMMSTGATHELLEIGIVSPEPKPTDGLGVGEVGYLITGVKDVRQSKVGDTVTAARNGAAEPLTGYREPRPMVYSGLYPVDGSDYPDLRDALEKLQLNDAALSYTPETSVALGFGFRCGFLGLLHMEITRERLQREFDLDLISTAPNVVYRVEMEDGTEHVVTNPSYWPEGKVRKVFEPVVKCTIISPSEFIGSIMELCQSRRGELGGMDYLSETRVELRYTLPMAEIIFDFFDSLKSRTRGYASLDYEESGEQESQLVKVDILLQGEAVDAFSAIVHKDAAQAYGHKMTTKLRELIPRQQFEVPIQAAIGSKIIARENIRAIRKDVLAKCYGGDISRKRKLLEKQKEGKKRMKTIGRVDVPQEAFVAALSSDAQADKPKDKK.

The tr-type G domain maps to 14–195 (SRIRNFCIIA…EVIRQVPPPV (182 aa)). GTP contacts are provided by residues 26-31 (DHGKST) and 142-145 (NKID).

It belongs to the TRAFAC class translation factor GTPase superfamily. Classic translation factor GTPase family. LepA subfamily.

The protein localises to the cell membrane. It carries out the reaction GTP + H2O = GDP + phosphate + H(+). In terms of biological role, required for accurate and efficient protein synthesis under certain stress conditions. May act as a fidelity factor of the translation reaction, by catalyzing a one-codon backward translocation of tRNAs on improperly translocated ribosomes. Back-translocation proceeds from a post-translocation (POST) complex to a pre-translocation (PRE) complex, thus giving elongation factor G a second chance to translocate the tRNAs correctly. Binds to ribosomes in a GTP-dependent manner. This is Elongation factor 4 from Nocardia farcinica (strain IFM 10152).